The sequence spans 129 residues: Small ribosomal subunit protein uS11 (129 aa).

It belongs to the universal ribosomal protein uS11 family. As to quaternary structure, part of the 30S ribosomal subunit. Interacts with proteins S7 and S18. Binds to IF-3.

Its function is as follows. Located on the platform of the 30S subunit, it bridges several disparate RNA helices of the 16S rRNA. Forms part of the Shine-Dalgarno cleft in the 70S ribosome. This is Small ribosomal subunit protein uS11 from Listeria innocua serovar 6a (strain ATCC BAA-680 / CLIP 11262).